Here is a 201-residue protein sequence, read N- to C-terminus: Recombination protein RecR (201 aa).

Residues 57–72 (CSDCRTFTEQDVCAIC) form a C4-type zinc finger. Positions 81–176 (GLVCVVESPA…MASRIAHGVP (96 aa)) constitute a Toprim domain.

The protein belongs to the RecR family.

Its function is as follows. May play a role in DNA repair. It seems to be involved in an RecBC-independent recombinational process of DNA repair. It may act with RecF and RecO. In Pectobacterium atrosepticum (strain SCRI 1043 / ATCC BAA-672) (Erwinia carotovora subsp. atroseptica), this protein is Recombination protein RecR.